We begin with the raw amino-acid sequence, 78 residues long: Large ribosomal subunit protein bL28 (78 aa).

The disordered stretch occupies residues 1 to 25 (MSRVCQVTGKRPTVGNNRSHAKNAT).

This sequence belongs to the bacterial ribosomal protein bL28 family.

The protein is Large ribosomal subunit protein bL28 of Tolumonas auensis (strain DSM 9187 / NBRC 110442 / TA 4).